The primary structure comprises 243 residues: DNA repair protein RecO (243 aa).

Belongs to the RecO family.

Involved in DNA repair and RecF pathway recombination. This chain is DNA repair protein RecO, found in Serratia proteamaculans (strain 568).